The sequence spans 753 residues: Neuroendocrine convertase 1 (753 aa).

The first 27 residues, 1-27, serve as a signal peptide directing secretion; the sequence is MGRRAWTLQCTAFSLFCAWCAMNSVKA. Residues 28 to 110 constitute a propeptide that is removed on maturation; the sequence is KKQFVNEWAA…QQYEKERSKR (83 aa). The 322-residue stretch at 129-450 folds into the Peptidase S8 domain; it reads QWYLQDTRMT…FGLLNAKALV (322 aa). Asp167 (charge relay system) is an active-site residue. N-linked (GlcNAc...) asparagine glycosylation is present at Asn173. His208 functions as the Charge relay system in the catalytic mechanism. 2 disulfides stabilise this stretch: Cys225–Cys374 and Cys317–Cys347. The active-site Charge relay system is the Ser382. The N-linked (GlcNAc...) asparagine glycan is linked to Asn401. The region spanning 460 to 597 is the P/Homo B domain; that stretch reads SVPEKKECVV…KLILHGTSSQ (138 aa). A disulfide bond links Cys467 and Cys494. Disordered regions lie at residues 617-657 and 676-695; these read RRGV…RRDE and SKNS…KPNI.

Belongs to the peptidase S8 family. Furin subfamily. Requires Ca(2+) as cofactor.

The protein resides in the cytoplasmic vesicle. It is found in the secretory vesicle. It carries out the reaction Release of protein hormones, neuropeptides and renin from their precursors, generally by hydrolysis of -Lys-Arg-|- bonds.. Its function is as follows. Involved in the processing of hormone and other protein precursors at sites comprised of pairs of basic amino acid residues. Substrates include POMC, renin, enkephalin, dynorphin, somatostatin, insulin and AGRP. This chain is Neuroendocrine convertase 1 (PCSK1), found in Bos taurus (Bovine).